A 267-amino-acid polypeptide reads, in one-letter code: NAD kinase 2 (267 aa).

Asp52 acts as the Proton acceptor in catalysis. NAD(+) is bound by residues 52–53 (DG), 124–125 (NE), Arg151, Asp153, 164–169 (TAYNKS), and Ala188.

Belongs to the NAD kinase family. A divalent metal cation serves as cofactor.

It localises to the cytoplasm. The enzyme catalyses NAD(+) + ATP = ADP + NADP(+) + H(+). Its function is as follows. Involved in the regulation of the intracellular balance of NAD and NADP, and is a key enzyme in the biosynthesis of NADP. Catalyzes specifically the phosphorylation on 2'-hydroxyl of the adenosine moiety of NAD to yield NADP. The chain is NAD kinase 2 from Bacillus subtilis (strain 168).